Reading from the N-terminus, the 422-residue chain is Histidine--tRNA ligase (422 aa).

The protein belongs to the class-II aminoacyl-tRNA synthetase family. As to quaternary structure, homodimer.

Its subcellular location is the cytoplasm. The catalysed reaction is tRNA(His) + L-histidine + ATP = L-histidyl-tRNA(His) + AMP + diphosphate + H(+). The polypeptide is Histidine--tRNA ligase (Nocardia farcinica (strain IFM 10152)).